The primary structure comprises 577 residues: Calcium-dependent protein kinase 22 (577 aa).

G2 is lipidated: N-myristoyl glycine. The 264-residue stretch at 105–368 (YRLGAELGRG…AKEVLEHPWL (264 aa)) folds into the Protein kinase domain. ATP contacts are provided by residues 111-119 (LGRGEFGVT) and K134. D234 acts as the Proton acceptor in catalysis. An autoinhibitory domain region spans residues 374 to 404 (APNVSLGEIVRSRLMQFSAMNKFKKKALGVV). EF-hand domains follow at residues 411 to 446 (EEMDKYTQMFHKMDKDNSGNLTLEDLKLGLQINGHP), 447 to 482 (VPETEIEMLLEAGDIDGNGTLDCEEFVTVLLHIKKM), 483 to 518 (SNEEYLPKAFKFFDKDGNGFIEMEELMDALGDELGP), and 520 to 553 (EQVVKDIIRDIDTDKDGRISYQEFESMMISGSDW). Ca(2+) is bound by residues D424, D426, S428, N430, D435, D460, D462, N464, T466, E471, D496, D498, N500, E507, D531, D533, D535, R537, and E542.

It belongs to the protein kinase superfamily. Ser/Thr protein kinase family. CDPK subfamily.

Its subcellular location is the membrane. It catalyses the reaction L-seryl-[protein] + ATP = O-phospho-L-seryl-[protein] + ADP + H(+). The enzyme catalyses L-threonyl-[protein] + ATP = O-phospho-L-threonyl-[protein] + ADP + H(+). Its activity is regulated as follows. Activated by calcium. Autophosphorylation may play an important role in the regulation of the kinase activity. In terms of biological role, may play a role in signal transduction pathways that involve calcium as a second messenger. This chain is Calcium-dependent protein kinase 22, found in Oryza sativa subsp. japonica (Rice).